The sequence spans 182 residues: Bis(5'-nucleosyl)-tetraphosphatase [asymmetrical] (182 aa).

Residues 3 to 110 (KQLYFSKFPV…IPRKKADFSE (108 aa)) form the HIT domain. Substrate-binding positions include Asn-28, Gln-84, and 90-93 (GQTV). The Histidine triad motif signature appears at 95–99 (HVHVH). His-97 acts as the Tele-AMP-histidine intermediate in catalysis. His-99 contributes to the substrate binding site. The tract at residues 135-161 (RYAGDERPPTSMRQAIPKDEDRKPRTL) is disordered. Over residues 150-161 (IPKDEDRKPRTL) the composition is skewed to basic and acidic residues.

The catalysed reaction is P(1),P(4)-bis(5'-guanosyl) tetraphosphate + H2O = GMP + GTP + 2 H(+). In terms of biological role, asymmetrically hydrolyzes Ap4A to yield AMP and ATP. The chain is Bis(5'-nucleosyl)-tetraphosphatase [asymmetrical] (aph1) from Schizosaccharomyces pombe (strain 972 / ATCC 24843) (Fission yeast).